Consider the following 214-residue polypeptide: Probable GTP-binding protein EngB (214 aa).

The EngB-type G domain occupies 31–214; it reads GPPEIAFAGR…LRAAILQTIA (184 aa). GTP contacts are provided by residues 39–46, 66–70, 93–96, 160–163, and 194–196; these read GRSNVGKS, GRTQE, DMPG, TKSD, and TSS. Mg(2+) is bound by residues Ser-46 and Thr-68.

It belongs to the TRAFAC class TrmE-Era-EngA-EngB-Septin-like GTPase superfamily. EngB GTPase family. Mg(2+) serves as cofactor.

Functionally, necessary for normal cell division and for the maintenance of normal septation. This chain is Probable GTP-binding protein EngB, found in Bartonella tribocorum (strain CIP 105476 / IBS 506).